The primary structure comprises 351 residues: UPF0104 membrane protein MTH_887 (351 aa).

8 consecutive transmembrane segments (helical) span residues 20 to 40 (IVLSFLAVAVVIFLIGFFAGF), 51 to 71 (SPYFLALNFVLEAIILILWTL), 137 to 157 (VFEFIPFALISILSAVLIMTW), 165 to 185 (IVVSVLILVTIAGFSLAVYAG), 244 to 264 (FVIGFFISLGMWALDVCRLYV), 275 to 295 (AVPLIIIYTVGILISLLPILP), 304 to 324 (ILVGLFAVAGIGADYVMAASV), and 328 to 348 (IASYIAPTLIGLIAAIYYGKQ).

This sequence belongs to the UPF0104 family.

It is found in the cell membrane. This Methanothermobacter thermautotrophicus (strain ATCC 29096 / DSM 1053 / JCM 10044 / NBRC 100330 / Delta H) (Methanobacterium thermoautotrophicum) protein is UPF0104 membrane protein MTH_887.